We begin with the raw amino-acid sequence, 204 residues long: Large ribosomal subunit protein bL25 (204 aa).

Belongs to the bacterial ribosomal protein bL25 family. CTC subfamily. Part of the 50S ribosomal subunit; part of the 5S rRNA/L5/L18/L25 subcomplex. Contacts the 5S rRNA. Binds to the 5S rRNA independently of L5 and L18.

In terms of biological role, this is one of the proteins that binds to the 5S RNA in the ribosome where it forms part of the central protuberance. The protein is Large ribosomal subunit protein bL25 of Burkholderia pseudomallei (strain 668).